The following is a 307-amino-acid chain: Olfactory receptor 5AC1 (307 aa).

The Extracellular segment spans residues 1–28 (MAEENKILVTHFVLTGLTDHPGLQAPLF). Residues 29 to 49 (LVFLVIYLITLVGNLGLMALI) traverse the membrane as a helical segment. Over 50 to 56 (WKDPHLH) the chain is Cytoplasmic. Residues 57-77 (TPIYLFLGSLAFADACTSSSV) form a helical membrane-spanning segment. Residues 78–99 (TSKMLINFLSKNHMLSMAKCAT) are Extracellular-facing. Residues cysteine 97 and cysteine 179 are joined by a disulfide bond. A helical transmembrane segment spans residues 100–120 (QFYFFGSNATTECFLLVVMAY). Residues 121-143 (DRYVAICNPLLYPVVMSNSLCTQ) lie on the Cytoplasmic side of the membrane. The chain crosses the membrane as a helical span at residues 144-164 (FIGISYFIGFLHSAIHVGLLF). Residues 165–195 (RLTFCRSNIIHYFYCEILQLFKISCTNPTVN) lie on the Extracellular side of the membrane. A helical transmembrane segment spans residues 196–216 (ILLIFIFSAFIQVFTFMTLIV). The Cytoplasmic portion of the chain corresponds to 217–239 (SYSYILSAILKKKSEKGRSKAFS). Residues 240 to 260 (TCSAHLLSVSLFYGTLFFMYV) traverse the membrane as a helical segment. Residues 261–271 (SSRSGSAADQA) are Extracellular-facing. The chain crosses the membrane as a helical span at residues 272 to 292 (KMYSLFYTIIIPLLNPFIYSL). Topologically, residues 293–307 (RNKEVIDALRRIMKK) are cytoplasmic.

This sequence belongs to the G-protein coupled receptor 1 family.

It is found in the cell membrane. Its function is as follows. Odorant receptor. This is Olfactory receptor 5AC1 (OR5AC1) from Homo sapiens (Human).